The sequence spans 348 residues: Quinolinate synthase (348 aa).

The iminosuccinate site is built by histidine 47 and serine 68. Cysteine 113 is a binding site for [4Fe-4S] cluster. Residues 139–141 and serine 156 each bind iminosuccinate; that span reads YAN. Cysteine 200 provides a ligand contact to [4Fe-4S] cluster. Residues 226–228 and threonine 243 contribute to the iminosuccinate site; that span reads HPE. Residue cysteine 297 participates in [4Fe-4S] cluster binding.

The protein belongs to the quinolinate synthase family. Type 1 subfamily. Requires [4Fe-4S] cluster as cofactor.

It localises to the cytoplasm. It catalyses the reaction iminosuccinate + dihydroxyacetone phosphate = quinolinate + phosphate + 2 H2O + H(+). Its pathway is cofactor biosynthesis; NAD(+) biosynthesis; quinolinate from iminoaspartate: step 1/1. Functionally, catalyzes the condensation of iminoaspartate with dihydroxyacetone phosphate to form quinolinate. In Sodalis glossinidius (strain morsitans), this protein is Quinolinate synthase.